The primary structure comprises 798 residues: Cadherin-20 (798 aa).

The N-terminal stretch at 1-35 is a signal peptide; that stretch reads MWTSGRMSNAKNLFGLGVSLYFWGLMDLTTTVLSG. Residues 36-58 constitute a propeptide that is removed on maturation; the sequence is SARPLTEGPEDNLSDKLHQRMKR. Asparagine 47 carries an N-linked (GlcNAc...) asparagine glycan. The Extracellular portion of the chain corresponds to 59–618; sequence SWVWNQFFVL…AYVLPVSLSR (560 aa). 5 Cadherin domains span residues 60–164, 165–273, 274–392, 389–493, and 493–615; these read WVWN…EPKF, LDGP…PPRF, PQKH…EPSF, EPSF…APEF, and FARF…LPVS. A Cell attachment site motif is present at residues 88–90; that stretch reads RGD. Asparagine 260 carries N-linked (GlcNAc...) asparagine glycosylation. N-linked (GlcNAc...) asparagine glycosylation is found at asparagine 419, asparagine 460, and asparagine 541. Residues 619-639 traverse the membrane as a helical segment; the sequence is GALIAILACIFVLLVLVLLIL. At 640–798 the chain is on the cytoplasmic side; that stretch reads SMRRQRKQPY…GATDSSGALW (159 aa).

In terms of tissue distribution, detected in embryonic spinal cord, in the brachial and lumbar section of motor neurons (at protein level). Detected in ventro-lateral portion of embryonic spinal cord, in the brachial and lumbar section of embryonic motor neurons. Detected in embryonic adductor motor neurons and embryonic dorsal root ganglion. Detected in the caudal half of newly generated somites and in presomitic mesoderm.

It is found in the cell membrane. Cadherins are calcium-dependent cell adhesion proteins. They preferentially interact with themselves in a homophilic manner in connecting cells; cadherins may thus contribute to the sorting of heterogeneous cell types. The polypeptide is Cadherin-20 (CDH20) (Gallus gallus (Chicken)).